Reading from the N-terminus, the 569-residue chain is Protein angel homolog 2 (569 aa).

3 disordered regions span residues M1–P22, L63–W92, and G109–N155. Residues L63–T72 show a composition bias toward polar residues. The segment covering P139–P150 has biased composition (low complexity).

It belongs to the CCR4/nocturin family.

This chain is Protein angel homolog 2 (angel2), found in Danio rerio (Zebrafish).